Reading from the N-terminus, the 201-residue chain is Recombination protein RecR (201 aa).

Residues 57 to 72 (CCDCRTFTEEERCTIC) form a C4-type zinc finger. A Toprim domain is found at 81-176 (GQICVVESPA…AASRIAHGVP (96 aa)).

The protein belongs to the RecR family.

May play a role in DNA repair. It seems to be involved in an RecBC-independent recombinational process of DNA repair. It may act with RecF and RecO. The polypeptide is Recombination protein RecR (Proteus mirabilis (strain HI4320)).